The primary structure comprises 376 residues: 23S rRNA (uracil(747)-C(5))-methyltransferase RlmC (376 aa).

[4Fe-4S] cluster is bound by residues Cys3, Cys11, Cys14, and Cys87. The S-adenosyl-L-methionine site is built by Gln212, Phe241, Glu262, and Asn307. Cys334 (nucleophile) is an active-site residue.

It belongs to the class I-like SAM-binding methyltransferase superfamily. RNA M5U methyltransferase family. RlmC subfamily.

The enzyme catalyses uridine(747) in 23S rRNA + S-adenosyl-L-methionine = 5-methyluridine(747) in 23S rRNA + S-adenosyl-L-homocysteine + H(+). In terms of biological role, catalyzes the formation of 5-methyl-uridine at position 747 (m5U747) in 23S rRNA. The sequence is that of 23S rRNA (uracil(747)-C(5))-methyltransferase RlmC from Salmonella choleraesuis (strain SC-B67).